A 269-amino-acid polypeptide reads, in one-letter code: Bifunctional protein FolD (269 aa).

NADP(+) is bound by residues 149–151 (GLG) and Val215.

This sequence belongs to the tetrahydrofolate dehydrogenase/cyclohydrolase family. In terms of assembly, homodimer.

The enzyme catalyses (6R)-5,10-methylene-5,6,7,8-tetrahydrofolate + NADP(+) = (6R)-5,10-methenyltetrahydrofolate + NADPH. It catalyses the reaction (6R)-5,10-methenyltetrahydrofolate + H2O = (6R)-10-formyltetrahydrofolate + H(+). It participates in one-carbon metabolism; tetrahydrofolate interconversion. Catalyzes the oxidation of 5,10-methylenetetrahydrofolate to 5,10-methenyltetrahydrofolate and then the hydrolysis of 5,10-methenyltetrahydrofolate to 10-formyltetrahydrofolate. The chain is Bifunctional protein FolD from Mycoplasma pneumoniae (strain ATCC 29342 / M129 / Subtype 1) (Mycoplasmoides pneumoniae).